The following is a 383-amino-acid chain: 23S rRNA (uracil(747)-C(5))-methyltransferase RlmC (383 aa).

Residues cysteine 3, cysteine 11, cysteine 14, and cysteine 89 each contribute to the [4Fe-4S] cluster site. Residues glutamine 214, phenylalanine 243, glutamate 270, and asparagine 315 each contribute to the S-adenosyl-L-methionine site. The Nucleophile role is filled by cysteine 342.

The protein belongs to the class I-like SAM-binding methyltransferase superfamily. RNA M5U methyltransferase family. RlmC subfamily.

The catalysed reaction is uridine(747) in 23S rRNA + S-adenosyl-L-methionine = 5-methyluridine(747) in 23S rRNA + S-adenosyl-L-homocysteine + H(+). Catalyzes the formation of 5-methyl-uridine at position 747 (m5U747) in 23S rRNA. In Actinobacillus succinogenes (strain ATCC 55618 / DSM 22257 / CCUG 43843 / 130Z), this protein is 23S rRNA (uracil(747)-C(5))-methyltransferase RlmC.